A 306-amino-acid polypeptide reads, in one-letter code: Putative F-box protein At1g47300 (306 aa).

An F-box domain is found at 1–45 (MISDSIPKELILEIMLRLPAKSIARFHCVSKQWASMLSRPYFTEL). Residues 235 to 278 (DPKLLESKEEEEEEEEEEEEEEEEEEEEEEEEEEEESKEREKEK) are disordered. Residues 242–270 (KEEEEEEEEEEEEEEEEEEEEEEEEEEEE) show a composition bias toward acidic residues.

This chain is Putative F-box protein At1g47300, found in Arabidopsis thaliana (Mouse-ear cress).